Here is a 343-residue protein sequence, read N- to C-terminus: Protein phosphatase 2C homolog 7, mitochondrial (343 aa).

The transit peptide at 1–39 (MFANVGFRTLRVSRGPLYGSCSQIISFSKRTFYSSAKSG) directs the protein to the mitochondrion. The PPM-type phosphatase domain occupies 76 to 342 (IYQKLKDSIR…DDITVVVVRV (267 aa)). Mn(2+)-binding residues include Asp-109, Gly-110, and Asp-265.

Requires Mg(2+) as cofactor. Mn(2+) serves as cofactor.

The protein resides in the mitochondrion. The catalysed reaction is O-phospho-L-seryl-[protein] + H2O = L-seryl-[protein] + phosphate. The enzyme catalyses O-phospho-L-threonyl-[protein] + H2O = L-threonyl-[protein] + phosphate. Its function is as follows. Protein phosphatase which positively regulates biosynthesis of the ubiquinone, coenzyme Q. Dephosphorylates and activates the ubiquinone biosynthesis protein CAT5/COQ7. Also dephosphorylates CIT1 on 'Ser-462', which leads to its activation. In Saccharomyces cerevisiae (strain ATCC 204508 / S288c) (Baker's yeast), this protein is Protein phosphatase 2C homolog 7, mitochondrial (PTC7).